The primary structure comprises 285 residues: Polyamine aminopropyltransferase (285 aa).

The PABS domain occupies 5–241; that stretch reads DNWYIEHFQP…GWWSVTMASK (237 aa). Residue Q35 participates in S-methyl-5'-thioadenosine binding. The spermidine site is built by H66 and D90. Residues D110 and 141 to 142 contribute to the S-methyl-5'-thioadenosine site; that span reads DG. D160 serves as the catalytic Proton acceptor. Residue 160-163 coordinates spermidine; that stretch reads DSTD. P167 provides a ligand contact to S-methyl-5'-thioadenosine.

It belongs to the spermidine/spermine synthase family. As to quaternary structure, homodimer or homotetramer.

The protein resides in the cytoplasm. The catalysed reaction is S-adenosyl 3-(methylsulfanyl)propylamine + putrescine = S-methyl-5'-thioadenosine + spermidine + H(+). Its pathway is amine and polyamine biosynthesis; spermidine biosynthesis; spermidine from putrescine: step 1/1. Catalyzes the irreversible transfer of a propylamine group from the amino donor S-adenosylmethioninamine (decarboxy-AdoMet) to putrescine (1,4-diaminobutane) to yield spermidine. This chain is Polyamine aminopropyltransferase, found in Xanthomonas axonopodis pv. citri (strain 306).